We begin with the raw amino-acid sequence, 512 residues long: Probable anion transporter 3, chloroplastic (512 aa).

The transit peptide at 1-44 directs the protein to the chloroplast; it reads MATVGSLKPLHHSSCSSSFPRNPIVNRKALLGFVFDSARKNQIR. The next 12 helical transmembrane spans lie at 102 to 124, 139 to 159, 167 to 187, 191 to 211, 228 to 248, 250 to 270, 324 to 344, 359 to 379, 396 to 416, 422 to 442, 462 to 482, and 486 to 506; these read VILTACMMCLCNADRVVMSVAVV, VVQSSFLWGYIFSSVIGGALV, VLAWGVALWSLATLLTPWAAA, LALLCVRAFFGLAEGVAMPSM, VGISMAGFHMGNVVGLLLTPL, LSSIGISGPFILFASLGLLWV, WAIIFANVTNNWGYFVLLSWM, AAWFSALPWATMAISGYYAGA, KIMQSIGFMGPGLSLLCLNFA, AAVFMTIALSLSSFSQAGFLL, AGTLAAIVSTIGTGYFVQWLG, and AFLTVTAFLYFATTVFWLLFA.

It belongs to the major facilitator superfamily. Sodium/anion cotransporter (TC 2.A.1.14) family. Expressed in roots.

Its subcellular location is the plastid. It localises to the chloroplast membrane. Functionally, inorganic phosphate and probable anion transporter. This chain is Probable anion transporter 3, chloroplastic (ANTR3), found in Arabidopsis thaliana (Mouse-ear cress).